The primary structure comprises 232 residues: Phosphatidylserine decarboxylase proenzyme (232 aa).

Residue S190 is the Schiff-base intermediate with substrate; via pyruvic acid of the active site. At S190 the chain carries Pyruvic acid (Ser); by autocatalysis.

Belongs to the phosphatidylserine decarboxylase family. PSD-A subfamily. As to quaternary structure, heterodimer of a large membrane-associated beta subunit and a small pyruvoyl-containing alpha subunit. It depends on pyruvate as a cofactor. In terms of processing, is synthesized initially as an inactive proenzyme. Formation of the active enzyme involves a self-maturation process in which the active site pyruvoyl group is generated from an internal serine residue via an autocatalytic post-translational modification. Two non-identical subunits are generated from the proenzyme in this reaction, and the pyruvate is formed at the N-terminus of the alpha chain, which is derived from the carboxyl end of the proenzyme. The post-translation cleavage follows an unusual pathway, termed non-hydrolytic serinolysis, in which the side chain hydroxyl group of the serine supplies its oxygen atom to form the C-terminus of the beta chain, while the remainder of the serine residue undergoes an oxidative deamination to produce ammonia and the pyruvoyl prosthetic group on the alpha chain.

Its subcellular location is the cell membrane. It catalyses the reaction a 1,2-diacyl-sn-glycero-3-phospho-L-serine + H(+) = a 1,2-diacyl-sn-glycero-3-phosphoethanolamine + CO2. It participates in phospholipid metabolism; phosphatidylethanolamine biosynthesis; phosphatidylethanolamine from CDP-diacylglycerol: step 2/2. Functionally, catalyzes the formation of phosphatidylethanolamine (PtdEtn) from phosphatidylserine (PtdSer). The chain is Phosphatidylserine decarboxylase proenzyme from Bradyrhizobium diazoefficiens (strain JCM 10833 / BCRC 13528 / IAM 13628 / NBRC 14792 / USDA 110).